We begin with the raw amino-acid sequence, 895 residues long: Procollagen lysyl hydroxylase and glycosyltransferase (895 aa).

Residues 1 to 194 are lysyl hydroxylase region; that stretch reads MISRTYVINL…PSDEFIPIMH (194 aa). Residues 537–895 are glucosyl transferase region; the sequence is YYFYISGDCI…KRYILVSFVN (359 aa). The Fe2OG dioxygenase domain maps to 805–895; sequence DINLAFVVKY…KRYILVSFVN (91 aa). Residues His-825, Asp-827, and His-877 each coordinate Fe cation. The active site involves Arg-887.

Fe cation serves as cofactor. L-ascorbate is required as a cofactor.

It catalyses the reaction L-lysyl-[collagen] + 2-oxoglutarate + O2 = (5R)-5-hydroxy-L-lysyl-[collagen] + succinate + CO2. In terms of biological role, displays two enzymatic activities involved in procollagen processing. Forms hydroxylysine residues in -Xaa-Lys-Gly- sequences in collagens. These hydroxylysines are subsequentially glucosylated by a glucosyltransferase activity. Collagen post-translationally modified is detected in mimivirus virion. In Acanthamoeba polyphaga (Amoeba), this protein is Procollagen lysyl hydroxylase and glycosyltransferase.